A 212-amino-acid chain; its full sequence is uncharacterized protein (212 aa).

4 consecutive transmembrane segments (helical) span residues 34–54 (IFGI…PAPG), 59–79 (FGVL…ELWL), 126–146 (ILMG…IPGT), and 171–191 (AGMI…YVFF).

It to R.meliloti ExoD.

It localises to the cell membrane. This is an uncharacterized protein from Synechocystis sp. (strain ATCC 27184 / PCC 6803 / Kazusa).